A 138-amino-acid polypeptide reads, in one-letter code: CLAVATA3/ESR (CLE)-related protein 2 (138 aa).

A signal peptide spans 1-22; it reads MPNIFKILLIVLLAVVSFRLSA. A required for secretion from the host cytoplasm to the host apoplasm region spans residues 23–90; it reads STGDKKTAND…VPSHVTNRSM (68 aa). 3 N-linked (GlcNAc...) asparagine glycosylation sites follow: N37, N87, and N123. 2 disordered regions span residues 66-97 and 116-138; these read AIGRSNAQGGNAAGLVPSHVTNRSMAPPPPPV and LAEKMPVNESKRLSPSGPDPHHH. The CLE signature appears at 127–138; the sequence is RLSPSGPDPHHH.

The protein belongs to the CLV3/ESR signal peptide family. As to expression, highly expressed exclusively within the dorsal esophageal gland cell during syncytium formation in host plants (at protein level).

The protein localises to the secreted. Its subcellular location is the host cytoplasm. It is found in the host extracellular space. The protein resides in the extracellular space. It localises to the apoplast. Functionally, mimics host plant CLE extracellular signal peptides that regulate cell fate. May play a role in the differentiation or division of feeding cells (syncytia) induced in plant roots during infection. This is CLAVATA3/ESR (CLE)-related protein 2 (CLE2) from Heterodera glycines (Soybean cyst nematode worm).